Consider the following 350-residue polypeptide: Spermidine/putrescine import ATP-binding protein PotA (350 aa).

The ABC transporter domain maps to leucine 6–isoleucine 236. An ATP-binding site is contributed by glycine 38–threonine 45.

It belongs to the ABC transporter superfamily. Spermidine/putrescine importer (TC 3.A.1.11.1) family. As to quaternary structure, the complex is composed of two ATP-binding proteins (PotA), two transmembrane proteins (PotB and PotC) and a solute-binding protein (PotD).

The protein localises to the cell membrane. The catalysed reaction is ATP + H2O + polyamine-[polyamine-binding protein]Side 1 = ADP + phosphate + polyamineSide 2 + [polyamine-binding protein]Side 1.. Functionally, part of the ABC transporter complex PotABCD involved in spermidine/putrescine import. Responsible for energy coupling to the transport system. This is Spermidine/putrescine import ATP-binding protein PotA from Mesoplasma florum (strain ATCC 33453 / NBRC 100688 / NCTC 11704 / L1) (Acholeplasma florum).